Consider the following 297-residue polypeptide: Ribosomal RNA small subunit methyltransferase H (297 aa).

Residues 37 to 39, glutamate 56, phenylalanine 87, aspartate 102, and histidine 109 each bind S-adenosyl-L-methionine; that span reads GGH.

This sequence belongs to the methyltransferase superfamily. RsmH family.

The protein resides in the cytoplasm. It catalyses the reaction cytidine(1402) in 16S rRNA + S-adenosyl-L-methionine = N(4)-methylcytidine(1402) in 16S rRNA + S-adenosyl-L-homocysteine + H(+). In terms of biological role, specifically methylates the N4 position of cytidine in position 1402 (C1402) of 16S rRNA. This is Ribosomal RNA small subunit methyltransferase H from Borrelia recurrentis (strain A1).